The following is a 286-amino-acid chain: Probable 4-deoxy-4-formamido-L-arabinose-phosphoundecaprenol deformylase ArnD (286 aa).

In terms of domain architecture, NodB homology spans 1–248 (MGTKLGVPNL…IAINEGINFC (248 aa)).

The protein belongs to the polysaccharide deacetylase family. ArnD deformylase subfamily.

It catalyses the reaction 4-deoxy-4-formamido-alpha-L-arabinopyranosyl di-trans,octa-cis-undecaprenyl phosphate + H2O = 4-amino-4-deoxy-alpha-L-arabinopyranosyl di-trans,octa-cis-undecaprenyl phosphate + formate. It participates in glycolipid biosynthesis; 4-amino-4-deoxy-alpha-L-arabinose undecaprenyl phosphate biosynthesis; 4-amino-4-deoxy-alpha-L-arabinose undecaprenyl phosphate from UDP-4-deoxy-4-formamido-beta-L-arabinose and undecaprenyl phosphate: step 2/2. Its pathway is bacterial outer membrane biogenesis; lipopolysaccharide biosynthesis. Its function is as follows. Catalyzes the deformylation of 4-deoxy-4-formamido-L-arabinose-phosphoundecaprenol to 4-amino-4-deoxy-L-arabinose-phosphoundecaprenol. The modified arabinose is attached to lipid A and is required for resistance to polymyxin and cationic antimicrobial peptides. The polypeptide is Probable 4-deoxy-4-formamido-L-arabinose-phosphoundecaprenol deformylase ArnD (Wigglesworthia glossinidia brevipalpis).